A 209-amino-acid chain; its full sequence is ATP-dependent Clp protease proteolytic subunit (209 aa).

Residue serine 106 is the Nucleophile of the active site. Histidine 131 is an active-site residue.

This sequence belongs to the peptidase S14 family. In terms of assembly, fourteen ClpP subunits assemble into 2 heptameric rings which stack back to back to give a disk-like structure with a central cavity, resembling the structure of eukaryotic proteasomes.

The protein localises to the cytoplasm. The catalysed reaction is Hydrolysis of proteins to small peptides in the presence of ATP and magnesium. alpha-casein is the usual test substrate. In the absence of ATP, only oligopeptides shorter than five residues are hydrolyzed (such as succinyl-Leu-Tyr-|-NHMec, and Leu-Tyr-Leu-|-Tyr-Trp, in which cleavage of the -Tyr-|-Leu- and -Tyr-|-Trp bonds also occurs).. Its function is as follows. Cleaves peptides in various proteins in a process that requires ATP hydrolysis. Has a chymotrypsin-like activity. Plays a major role in the degradation of misfolded proteins. The chain is ATP-dependent Clp protease proteolytic subunit from Brucella melitensis biotype 2 (strain ATCC 23457).